A 458-amino-acid polypeptide reads, in one-letter code: Smoothelin-like protein 2 (458 aa).

A coiled-coil region spans residues Leu-24–Thr-88. Disordered regions lie at residues Thr-87–Arg-111, Phe-123–Glu-142, and Ile-151–Ala-312. Residues Pro-94–Gly-104 are compositionally biased toward pro residues. Position 96 is a phosphothreonine (Thr-96). Residues Ser-98, Ser-126, and Ser-131 each carry the phosphoserine modification. The span at Ser-131–Glu-142 shows a compositional bias: basic and acidic residues. 2 stretches are compositionally biased toward low complexity: residues Pro-158 to Pro-167 and Thr-209 to Ala-220. Residues Leu-225–Asn-244 are compositionally biased toward polar residues. Positions Ser-245–Ser-254 are enriched in low complexity. Residues Ser-252, Ser-254, and Ser-267 each carry the phosphoserine modification. Residues Leu-270–Pro-283 show a composition bias toward pro residues. Thr-272 bears the Phosphothreonine mark. Ser-276 is subject to Phosphoserine. Residues Arg-290–Val-299 show a composition bias toward basic and acidic residues. A compositionally biased stretch (polar residues) spans Arg-300 to Ala-310. Ser-341 carries the phosphoserine modification. One can recognise a Calponin-homology (CH) domain in the interval Ser-348 to Arg-455.

Belongs to the smoothelin family.

This chain is Smoothelin-like protein 2 (SMTNL2), found in Bos taurus (Bovine).